We begin with the raw amino-acid sequence, 76 residues long: Exodeoxyribonuclease 7 small subunit (76 aa).

The protein belongs to the XseB family. In terms of assembly, heterooligomer composed of large and small subunits.

Its subcellular location is the cytoplasm. The catalysed reaction is Exonucleolytic cleavage in either 5'- to 3'- or 3'- to 5'-direction to yield nucleoside 5'-phosphates.. In terms of biological role, bidirectionally degrades single-stranded DNA into large acid-insoluble oligonucleotides, which are then degraded further into small acid-soluble oligonucleotides. In Methylococcus capsulatus (strain ATCC 33009 / NCIMB 11132 / Bath), this protein is Exodeoxyribonuclease 7 small subunit.